The sequence spans 309 residues: Type II methyltransferase M.HindIII (309 aa).

Belongs to the N(4)/N(6)-methyltransferase family.

It catalyses the reaction a 2'-deoxyadenosine in DNA + S-adenosyl-L-methionine = an N(6)-methyl-2'-deoxyadenosine in DNA + S-adenosyl-L-homocysteine + H(+). Its function is as follows. A beta subtype methylase that recognizes the double-stranded sequence 5'-AAGCTT-3', methylates A-1 on both strands, and protects the DNA from cleavage by the HindIII endonuclease. This is Type II methyltransferase M.HindIII from Haemophilus influenzae (strain ATCC 51907 / DSM 11121 / KW20 / Rd).